A 284-amino-acid polypeptide reads, in one-letter code: Two-pore potassium channel 4 (284 aa).

The interval 1 to 21 (MEEENLLNENLLHPNESSPEE) is disordered. The Cytoplasmic portion of the chain corresponds to 1–31 (MEEENLLNENLLHPNESSPEETQVTTVSKSK). A helical transmembrane segment spans residues 32–52 (WTILVLAMILLLVYLTFGVCT). The pore-forming intramembrane region spans 70-89 (DAFYFSIVTFSTVGYGDIVP). A helical membrane pass occupies residues 93–113 (TTKILTIVLVSTGVVFLDYLL). Residues 114–156 (NRVVSHVLSLQENAILDRINKTRNRAIRDHIAEDGKIRLKWKL) are Cytoplasmic-facing. The chain crosses the membrane as a helical span at residues 157–177 (CLAFCAVGLCVGSGALFLHVF). Positions 184 to 203 (DSVYLSVISVTTVGYGDKTF) form an intramembrane region, pore-forming. The chain crosses the membrane as a helical span at residues 211 to 231 (FAVFWLLLSTIAMATLFLYLA). At 232 to 284 (EMRIDRTTVMKLPPSESEFIVFKLRESGRISEDDIKQIVREFENLEEVPSSGS) the chain is on the cytoplasmic side.

It belongs to the two pore domain potassium channel (TC 1.A.1.7) family. Homodimer. Predominantly expressed in pollen.

Its subcellular location is the cell membrane. In terms of biological role, voltage-independent, instantaneously activating, potassium-selective plasma membrane ion channel. Open rectifier. Regulated by cytoplasmic pH and extra-cellular calcium. Has some permeability for Rb(+) and NH(4)(+), but none for Na(+) or Li(+). This chain is Two-pore potassium channel 4 (TPK4), found in Arabidopsis thaliana (Mouse-ear cress).